We begin with the raw amino-acid sequence, 1074 residues long: MARFSSISDTLESDDSGIKVLFAVDGCAVSFSLALLTGQIPSTNSVYVIGYWDPSDRFSSIPFLDGDPNTNERISTTVCNLEDVPSPLRVEFCLLNQMASGMGGADLKLRTRAIFVCRFTSWSEMNAIANSIIYGTPIQAGVLQATISETETFMLHDEFNLALHVFLNGLSLKGRNKKDVCMSLNHNYISSVSENFPRGKRGLTGLYLQHEQKVTAAYRRIYGGSTTTAFWYVSKFGPDEKSLVLALRYYLLQAQEEVTGIATGYDLQAIKDICKTYAVSVNPNPTGFLAADLTSFSRLSRFCCLSYYSKGSVAIAFPSYVERRIMADIAEVDALREYIERDRPSLKISDLEFVKYIYLAYFECYNREQLKRHLKDVTVSLPDEDIYKKSSLGKCAVENFFTHVRSRLNVNDHIAHNVLPEQVEMGNKLVRKFGRARMYLSTTMTNESHFTGICECASVILKRLDTLEMKLQKYGWPSDRVDGSNLMADNQNNSTLIPYDKSRSSGMILECSNTHSRGGPMIVKRLLALVSADSRAGGIGPANMLMGIDSAIDGPLPVYRVGMSKGRQAFTVLMTECWERTIPSPGSAKAHLIKLNNSYGTSTEDLISRDLFLTSEIEQLIGSTVELPEITCGSADEQQYINRNEVFNGNLAIGNIVLDVDIHLRNPIPLRLMHAAIRGFRSGILRALALLLPKANIDHGSYPCYFYKSSCKKSRVMGGAPWMLHDAELAPDYSMFENAEFDLEMGIDDPLLIDQIDESLTRWSSESSRSVDLDPDKPCGCHDKIGLRVCIPVPSPYLLVGSKTLAGLSRIIQQAVLLERNFVETIGPYLKNYEIIDSGVYGHGRSLRLPFFGKIDENGIVSRRLVPFFVIPDDCADMEKFIVAHFEPKNFHFHSSIPLEKAAIILKDIGGEYAGFFERKITVNRDIFFGTRLSLSIALRERGVDINDCAAITTFVTDHILDDIITYVYEHIPDHAIEYQNLSVSCCVVKSDWILLQLIPNKTIGYRHGFTCVRFKHARARRASARSYLALNVDAHGRLCVCVIQQCFAAKCGNNKLRTLFTVDIDSKCRLEHQ.

The CHC2-type zinc finger occupies 1012-1052; sequence CVRFKHARARRASARSYLALNVDAHGRLCVCVIQQCFAAKC.

It belongs to the herpesviridae DNA primase family. In terms of assembly, associates with the helicase and the primase-associated factor to form the helicase-primase factor.

It localises to the host nucleus. In terms of biological role, essential component of the helicase/primase complex. Unwinds the DNA at the replication forks and generates single-stranded DNA for both leading and lagging strand synthesis. The primase initiates primer synthesis and thereby produces large amount of short RNA primers on the lagging strand that the polymerase elongates using dNTPs. This is DNA primase (MDV066) from Gallus gallus (Chicken).